The sequence spans 761 residues: uncharacterized protein (761 aa).

TPR repeat units lie at residues Glu-35–Ser-68, Ala-69–Asp-102, Asp-103–Lys-136, Val-137–Phe-170, Glu-172–Asn-203, Glu-204–Asp-237, Leu-351–Ala-384, and Ala-419–Glu-452. The interval Lys-487–Gly-761 is protein sulfotransferase-like.

The protein in the C-terminal section; belongs to the protein sulfotransferase family.

This is an uncharacterized protein from Aquifex aeolicus (strain VF5).